The following is a 328-amino-acid chain: Probable E3 ubiquitin-protein ligase RHC1A (328 aa).

At Ser-2 the chain carries N-acetylserine. Residues 190 to 231 (CPVCKDEFELGSEAKQMPCNHIYHSDCIVPWLVQHNSCPVCR) form an RING-type; atypical zinc finger. Positions 233 to 324 (ELPSASGPSS…QQSYMGYSGW (92 aa)) are disordered. The span at 238-250 (SGPSSSQNRTTPT) shows a compositional bias: polar residues. 2 stretches are compositionally biased toward low complexity: residues 251–266 (RNYR…NSRE) and 275–290 (FSSF…SSSS). A compositionally biased stretch (polar residues) spans 291–300 (TQNRGGTRNS).

It catalyses the reaction S-ubiquitinyl-[E2 ubiquitin-conjugating enzyme]-L-cysteine + [acceptor protein]-L-lysine = [E2 ubiquitin-conjugating enzyme]-L-cysteine + N(6)-ubiquitinyl-[acceptor protein]-L-lysine.. It functions in the pathway protein modification; protein ubiquitination. In terms of biological role, probable E3 ubiquitin-protein ligase that may possess E3 ubiquitin ligase activity in vitro. This Arabidopsis thaliana (Mouse-ear cress) protein is Probable E3 ubiquitin-protein ligase RHC1A.